A 366-amino-acid chain; its full sequence is Ribosomal RNA large subunit methyltransferase M (366 aa).

Residues Ser-188, 221–224 (CPGG), Asp-240, Asp-260, and Asp-277 each bind S-adenosyl-L-methionine. The Proton acceptor role is filled by Lys-306.

Belongs to the class I-like SAM-binding methyltransferase superfamily. RNA methyltransferase RlmE family. RlmM subfamily. In terms of assembly, monomer.

The protein resides in the cytoplasm. The enzyme catalyses cytidine(2498) in 23S rRNA + S-adenosyl-L-methionine = 2'-O-methylcytidine(2498) in 23S rRNA + S-adenosyl-L-homocysteine + H(+). Functionally, catalyzes the 2'-O-methylation at nucleotide C2498 in 23S rRNA. The chain is Ribosomal RNA large subunit methyltransferase M from Shigella dysenteriae serotype 1 (strain Sd197).